A 481-amino-acid chain; its full sequence is Betaine aldehyde dehydrogenase 2 (481 aa).

Positions 29 and 96 each coordinate K(+). 152–154 contributes to the NAD(+) binding site; the sequence is GAW. Lys-164 acts as the Charge relay system in catalysis. 178-181 provides a ligand contact to NAD(+); sequence KPSE. Val-182 serves as a coordination point for K(+). 231–234 provides a ligand contact to NAD(+); that stretch reads SVKT. Ile-246 contacts K(+). The Proton acceptor role is filled by Glu-252. Positions 254, 286, and 383 each coordinate NAD(+). Cys-286 acts as the Nucleophile in catalysis. Cys-286 is modified (cysteine sulfenic acid (-SOH)). K(+)-binding residues include Lys-453 and Gly-456. The active-site Charge relay system is Glu-460.

Belongs to the aldehyde dehydrogenase family. As to quaternary structure, dimer of dimers. K(+) serves as cofactor.

It carries out the reaction betaine aldehyde + NAD(+) + H2O = glycine betaine + NADH + 2 H(+). Its pathway is amine and polyamine biosynthesis; betaine biosynthesis via choline pathway; betaine from betaine aldehyde: step 1/1. Functionally, involved in the biosynthesis of the osmoprotectant glycine betaine. Catalyzes the irreversible oxidation of betaine aldehyde to the corresponding acid. This is Betaine aldehyde dehydrogenase 2 from Rhizobium meliloti (strain 1021) (Ensifer meliloti).